Here is a 1398-residue protein sequence, read N- to C-terminus: DNA-directed RNA polymerase subunit beta' (1398 aa).

Cysteine 71, cysteine 73, cysteine 86, and cysteine 89 together coordinate Zn(2+). Positions 462, 464, and 466 each coordinate Mg(2+). Residues cysteine 810, cysteine 884, cysteine 891, and cysteine 894 each contribute to the Zn(2+) site.

Belongs to the RNA polymerase beta' chain family. In terms of assembly, the RNAP catalytic core consists of 2 alpha, 1 beta, 1 beta' and 1 omega subunit. When a sigma factor is associated with the core the holoenzyme is formed, which can initiate transcription. Mg(2+) is required as a cofactor. It depends on Zn(2+) as a cofactor.

The catalysed reaction is RNA(n) + a ribonucleoside 5'-triphosphate = RNA(n+1) + diphosphate. Its function is as follows. DNA-dependent RNA polymerase catalyzes the transcription of DNA into RNA using the four ribonucleoside triphosphates as substrates. The chain is DNA-directed RNA polymerase subunit beta' from Mesorhizobium japonicum (strain LMG 29417 / CECT 9101 / MAFF 303099) (Mesorhizobium loti (strain MAFF 303099)).